The primary structure comprises 1031 residues: GTPase-activating protein DDB_G0291510 (1031 aa).

A disordered region spans residues 18–48 (VEKGDIDENNSGSINNRPLSPTLFSSNSSNN). Over residues 26 to 41 (NNSGSINNRPLSPTLF) the composition is skewed to polar residues. Positions 186–404 (FKDLEQTQTE…RTFKDQLESI (219 aa)) constitute a Rap-GAP domain. Residues 471–881 (NEKINCLDVV…LSNDDCNLDN (411 aa)) enclose the CNH domain. Positions 920–950 (NNNYNNNGNNSNGGNNNNNNNNNNGCNNSLI) are disordered.

In Dictyostelium discoideum (Social amoeba), this protein is GTPase-activating protein DDB_G0291510.